The chain runs to 347 residues: NADH-ubiquinone oxidoreductase chain 2 (347 aa).

The next 11 helical transmembrane spans lie at 3-23 (PPILIIIMSTVISGTMIVLTS), 25-45 (HWMLTWIGFEMNMLAVIPILM), 59-79 (YFLMQATASMLLMMGITINLL), 96-116 (TLMTIALAMKLGLAPFHFWVP), 122-142 (ISLSSGMILLTWQKIAPLSVL), 153-173 (LLLLMAILSVLIGGWGGLNQT), 178-198 (ILAYSSIAHMGWMSTILIYNP), 200-220 (MMLLNLIIYIMMTLSTFMLFM), 237-257 (MPLITSLILMLMLSLGGLPPL), 274-294 (EMIIMPTFLAITALLNLYFYM), and 325-345 (FLPPLIVMSTMLIPLTPIISI).

Belongs to the complex I subunit 2 family. Core subunit of respiratory chain NADH dehydrogenase (Complex I) which is composed of 45 different subunits. Interacts with TMEM242.

The protein resides in the mitochondrion inner membrane. The enzyme catalyses a ubiquinone + NADH + 5 H(+)(in) = a ubiquinol + NAD(+) + 4 H(+)(out). In terms of biological role, core subunit of the mitochondrial membrane respiratory chain NADH dehydrogenase (Complex I) which catalyzes electron transfer from NADH through the respiratory chain, using ubiquinone as an electron acceptor. Essential for the catalytic activity and assembly of complex I. The protein is NADH-ubiquinone oxidoreductase chain 2 of Paradoxurus hermaphroditus (Asian palm civet).